The following is a 130-amino-acid chain: Small ribosomal subunit protein uS9 (130 aa).

It belongs to the universal ribosomal protein uS9 family.

This Cupriavidus taiwanensis (strain DSM 17343 / BCRC 17206 / CCUG 44338 / CIP 107171 / LMG 19424 / R1) (Ralstonia taiwanensis (strain LMG 19424)) protein is Small ribosomal subunit protein uS9.